We begin with the raw amino-acid sequence, 392 residues long: Probable tRNA sulfurtransferase (392 aa).

The region spanning 61–168 (DEALKLLSKV…EFTYIYSEII (108 aa)) is the THUMP domain. ATP-binding positions include 185–186 (LL), 210–211 (HF), R267, G289, and Q298.

It belongs to the ThiI family.

The protein resides in the cytoplasm. It catalyses the reaction [ThiI sulfur-carrier protein]-S-sulfanyl-L-cysteine + a uridine in tRNA + 2 reduced [2Fe-2S]-[ferredoxin] + ATP + H(+) = [ThiI sulfur-carrier protein]-L-cysteine + a 4-thiouridine in tRNA + 2 oxidized [2Fe-2S]-[ferredoxin] + AMP + diphosphate. The catalysed reaction is [ThiS sulfur-carrier protein]-C-terminal Gly-Gly-AMP + S-sulfanyl-L-cysteinyl-[cysteine desulfurase] + AH2 = [ThiS sulfur-carrier protein]-C-terminal-Gly-aminoethanethioate + L-cysteinyl-[cysteine desulfurase] + A + AMP + 2 H(+). Its pathway is cofactor biosynthesis; thiamine diphosphate biosynthesis. Functionally, catalyzes the ATP-dependent transfer of a sulfur to tRNA to produce 4-thiouridine in position 8 of tRNAs, which functions as a near-UV photosensor. Also catalyzes the transfer of sulfur to the sulfur carrier protein ThiS, forming ThiS-thiocarboxylate. This is a step in the synthesis of thiazole, in the thiamine biosynthesis pathway. The sulfur is donated as persulfide by IscS. This chain is Probable tRNA sulfurtransferase, found in Acetivibrio thermocellus (strain ATCC 27405 / DSM 1237 / JCM 9322 / NBRC 103400 / NCIMB 10682 / NRRL B-4536 / VPI 7372) (Clostridium thermocellum).